A 146-amino-acid polypeptide reads, in one-letter code: Large ribosomal subunit protein uL15 (146 aa).

The tract at residues 1–54 is disordered; the sequence is MTIKLHDLRPAPGSKTPRTRVGRGEGSKGKTAGRGTKGTKARKQVPTTFEGGQM.

It belongs to the universal ribosomal protein uL15 family. Part of the 50S ribosomal subunit.

Binds to the 23S rRNA. This is Large ribosomal subunit protein uL15 from Mycobacterium marinum (strain ATCC BAA-535 / M).